A 285-amino-acid polypeptide reads, in one-letter code: MSARILDGRVLAQALRHELAAQIAELRERIDRAPVIAVVQVGEDPAATRYVRSIDRLSQSLGAACRTIILPDVVTQAELEATVSRLSADDRVDGILLQLPLPAGLSLDGVLSRLIPEKDLDGIHPINAGLLAQGRPALIPNTPAGGMELLRRYEIEVRGKRAAVVGRSAIVGRPMALLLLQADATVTICHSRTSDLGAVLRECDIIVAAAGRPQLITAEMIKPGATIIDFGTNVLADGSMVGDVDFAAAVEVAGAITPVPGGTGPVTNVMLIQNLIKATRSRLGI.

NADP(+) contacts are provided by residues 166–168, Ser-191, and Thr-232; that span reads GRS.

Belongs to the tetrahydrofolate dehydrogenase/cyclohydrolase family. As to quaternary structure, homodimer.

The catalysed reaction is (6R)-5,10-methylene-5,6,7,8-tetrahydrofolate + NADP(+) = (6R)-5,10-methenyltetrahydrofolate + NADPH. It carries out the reaction (6R)-5,10-methenyltetrahydrofolate + H2O = (6R)-10-formyltetrahydrofolate + H(+). Its pathway is one-carbon metabolism; tetrahydrofolate interconversion. Functionally, catalyzes the oxidation of 5,10-methylenetetrahydrofolate to 5,10-methenyltetrahydrofolate and then the hydrolysis of 5,10-methenyltetrahydrofolate to 10-formyltetrahydrofolate. The sequence is that of Bifunctional protein FolD from Chloroflexus aggregans (strain MD-66 / DSM 9485).